Here is a 66-residue protein sequence, read N- to C-terminus: U1-theraphotoxin-Cg1a 2 (66 aa).

The N-terminal stretch at 1-21 (MKTSALFVIFGLVLLFCNSFA) is a signal peptide. A propeptide spanning residues 22-29 (AELEMTGR) is cleaved from the precursor. Intrachain disulfides connect Cys31–Cys46, Cys38–Cys51, and Cys45–Cys58. Residue Pro63 is modified to Proline amide.

It belongs to the neurotoxin 10 (Hwtx-1) family. 46 (Jztx-7/10/12) subfamily. As to expression, expressed by the venom gland.

The protein resides in the secreted. Probable ion channel inhibitor. This is U1-theraphotoxin-Cg1a 2 from Chilobrachys guangxiensis (Chinese earth tiger tarantula).